Consider the following 211-residue polypeptide: MKQELKIPQATTKRLPLYYRFIQNFAQEGMERISSKELSEAMKIDSATIRRDFSYFGALGKKGYGYDVQHLLQFFSQTLDQHETTKVALIGVGNLGSALLKYNFQKNHNTHIVVAFDSKAPKDGKMISNIPVFHPDLLEEKYAEYGAELAILTVSPRSAQKMADRLAAMNAKGILNFTPERLTVPDSMQLLTIDLSVELQALIYLIRNQEV.

Positions 17-56 form a DNA-binding region, H-T-H motif; that stretch reads LYYRFIQNFAQEGMERISSKELSEAMKIDSATIRRDFSYF. 91 to 96 provides a ligand contact to NAD(+); the sequence is GVGNLG.

This sequence belongs to the transcriptional regulatory Rex family. In terms of assembly, homodimer.

Its subcellular location is the cytoplasm. Modulates transcription in response to changes in cellular NADH/NAD(+) redox state. This chain is Redox-sensing transcriptional repressor Rex, found in Lysinibacillus sphaericus (strain C3-41).